We begin with the raw amino-acid sequence, 203 residues long: Pyridoxal 5'-phosphate synthase subunit PdxT (203 aa).

An L-glutamine-binding site is contributed by 49–51 (GES). Cys-81 (nucleophile) is an active-site residue. L-glutamine-binding positions include Arg-110 and 139-140 (IR). Active-site charge relay system residues include His-175 and Glu-177.

This sequence belongs to the glutaminase PdxT/SNO family. In the presence of PdxS, forms a dodecamer of heterodimers. Only shows activity in the heterodimer.

The enzyme catalyses aldehydo-D-ribose 5-phosphate + D-glyceraldehyde 3-phosphate + L-glutamine = pyridoxal 5'-phosphate + L-glutamate + phosphate + 3 H2O + H(+). The catalysed reaction is L-glutamine + H2O = L-glutamate + NH4(+). It functions in the pathway cofactor biosynthesis; pyridoxal 5'-phosphate biosynthesis. Catalyzes the hydrolysis of glutamine to glutamate and ammonia as part of the biosynthesis of pyridoxal 5'-phosphate. The resulting ammonia molecule is channeled to the active site of PdxS. The protein is Pyridoxal 5'-phosphate synthase subunit PdxT of Parafrankia sp. (strain EAN1pec).